A 201-amino-acid chain; its full sequence is MNSLAIRVSKVLRSSSISPLAISAERGSKSWFSTGPIDEGVEEDFEENVTERPELQPHGVDPRKGWGFRGVHRAIICGKVGQAPLQKILRNGRTVTIFTVGTGGMFDQRLVGATNQPKPAQWHRIAVHNEVLGSYAVQKLAKNSSVYVEGDIETRVYNDSISSEVKSIPEICVRRDGKIRMIKYGESISKISFDELKEGLI.

The 114-residue stretch at 71–184 (VHRAIICGKV…RDGKIRMIKY (114 aa)) folds into the SSB domain.

The protein localises to the mitochondrion. In terms of biological role, binds to ss-DNA. The sequence is that of Single-stranded DNA-binding protein, mitochondrial from Arabidopsis thaliana (Mouse-ear cress).